The chain runs to 1374 residues: Probable multidrug resistance-associated protein lethal(2)03659 (1374 aa).

The interval 1–40 is disordered; it reads MDKQPVLEPTFDSVSERENTSIEESSLLENNGFDHRNKDE. A run of 6 helical transmembrane segments spans residues 159–179, 205–225, 282–302, 305–325, 404–424, and 426–446; these read LLRVFGWQLGFPGLAIFVVEL, AGFYYAVAQIVISALTVMILT, YTVHYLWVGPLQVLVITYLMY, IGISAVFGVLFMLLFMPIQMY, IFLSLVGYVILGKVFTPEIAF, and ITAYYNVLLAAMSIYVPSAII. Positions 168-449 constitute an ABC transmembrane type-1 1 domain; the sequence is GFPGLAIFVV…YVPSAIIQTA (282 aa). A disordered region spans residues 466 to 492; that stretch reads ELGSSDKSEGPSKDTVPGNPPSNNNEA. The 224-residue stretch at 499 to 722 folds into the ABC transporter 1 domain; it reads ISIRDLKAKW…GLITGLGSLS (224 aa). An ATP-binding site is contributed by 534–541; that stretch reads GLTGSGKS. An N-linked (GlcNAc...) asparagine glycan is attached at asparagine 561. The segment at 723–766 is disordered; it reads KTDKAKTEEQEPLNLNSPDNKNEVTPIKENSEQTVGGSSSGKEH. The next 5 membrane-spanning stretches (helical) occupy residues 787–807, 845–865, 913–933, 938–958, and 1025–1045; these read GGGLVAFLVMLSSSVLAQVAV, LIIILSVIMNLSSSFLLFNIA, VVLVDVMQIALWLAGIIIVIA, LLLVPTLMLSVIFYHLRNLYL, and YCMNCICVIYISIITLSFFAF. The ABC transmembrane type-1 2 domain occupies 793–1079; it reads FLVMLSSSVL…GVRQTAELEN (287 aa). The region spanning 1119 to 1352 is the ABC transporter 2 domain; it reads FKELNLRYTP…SDSKVFHNLV (234 aa). Residue 1153–1160 coordinates ATP; sequence GRTGAGKS. N-linked (GlcNAc...) asparagine glycans are attached at residues asparagine 1254 and asparagine 1353.

Belongs to the ABC transporter superfamily. ABCC family. Conjugate transporter (TC 3.A.1.208) subfamily. As to expression, uniform expression in embryos.

Its subcellular location is the membrane. Functionally, vital for development. In Drosophila melanogaster (Fruit fly), this protein is Probable multidrug resistance-associated protein lethal(2)03659 (l(2)03659).